Reading from the N-terminus, the 335-residue chain is MPKRRDILAIVLIVLPWTLLVTVWHQSTIAPLLTTHKGEPLTDSRREAAPGADPREYCMSDRDIVEVVRTEYVYTRPPPWSDTLPTIHVVTPTYSRPVQKAELTRMANTLLHVPNLHWLVVEDAPRRTPLTARLLRDTGLNYTHLHVETPRNYKLRGDARDPRIPRGTMQRNLALRWLRETFPRNSSQPGVVYFADDDNTYSLELFEEMRSTRRVSVWPVAFVGGLRYEAPRVNGAGKVVGWKTVFDPHRPFAIDMAGFAVNLRLILQRSQAYFKLRGVKGGYQESSLLRELVTLNDLEPKAANCTKILVWHTRTEKPVLVNEGKKGFTDPTVEI.

Residues 1-6 (MPKRRD) are Cytoplasmic-facing. The interval 3-5 (KRR) is essential for transport from endoplasmic reticulum to Golgi apparatus and interaction with SAR1A. Residues 7 to 27 (ILAIVLIVLPWTLLVTVWHQS) form a helical; Signal-anchor for type II membrane protein membrane-spanning segment. Residues 28 to 335 (TIAPLLTTHK…KGFTDPTVEI (308 aa)) are Lumenal-facing. 92-94 (PTY) contributes to the UDP-alpha-D-glucuronate binding site. Phosphothreonine occurs at positions 104 and 109. Asp-123 lines the UDP-alpha-D-glucuronate pocket. The N-linked (GlcNAc...) asparagine glycan is linked to Asn-141. Residues Arg-166 and Arg-171 each coordinate UDP-alpha-D-glucuronate. N-linked (GlcNAc...) asparagine glycosylation is present at Asn-185. 196-198 (DDD) provides a ligand contact to UDP-alpha-D-glucuronate. Asp-198 is a binding site for Mn(2+). The interval 246–255 (FDPHRPFAID) is interaction with galactose moiety of substrate glycoprotein. Glu-285 functions as the Proton donor/acceptor in the catalytic mechanism. N-linked (GlcNAc...) asparagine glycosylation is present at Asn-304. 312–314 (HTR) provides a ligand contact to UDP-alpha-D-glucuronate.

Belongs to the glycosyltransferase 43 family. In terms of assembly, homodimer. Interacts with SAR1A. Requires Mn(2+) as cofactor. In terms of processing, the soluble form derives from the membrane form by proteolytic processing.

It localises to the golgi apparatus membrane. Its subcellular location is the secreted. It catalyses the reaction 3-O-(beta-D-galactosyl-(1-&gt;3)-beta-D-galactosyl-(1-&gt;4)-beta-D-xylosyl)-L-seryl-[protein] + UDP-alpha-D-glucuronate = 3-O-(beta-D-GlcA-(1-&gt;3)-beta-D-Gal-(1-&gt;3)-beta-D-Gal-(1-&gt;4)-beta-D-Xyl)-L-seryl-[protein] + UDP + H(+). It participates in protein modification; protein glycosylation. Involved in the biosynthesis of L2/HNK-1 carbohydrate epitope on glycoproteins. Can also play a role in glycosaminoglycan biosynthesis. Substrates include asialo-orosomucoid (ASOR), asialo-fetuin, and asialo-neural cell adhesion molecule. Requires sphingomyelin for activity: stearoyl-sphingomyelin was the most effective, followed by palmitoyl-sphingomyelin and lignoceroyl-sphingomyelin. Activity was demonstrated only for sphingomyelin with a saturated fatty acid and not for that with an unsaturated fatty acid, regardless of the length of the acyl group. This chain is Galactosylgalactosylxylosylprotein 3-beta-glucuronosyltransferase 1, found in Canis lupus familiaris (Dog).